The chain runs to 429 residues: UDP-N-acetylglucosamine 1-carboxyvinyltransferase (429 aa).

22–23 contributes to the phosphoenolpyruvate binding site; sequence KN. R102 contacts UDP-N-acetyl-alpha-D-glucosamine. The active-site Proton donor is C126. At C126 the chain carries 2-(S-cysteinyl)pyruvic acid O-phosphothioketal. UDP-N-acetyl-alpha-D-glucosamine contacts are provided by residues 131-135, D316, and I338; that span reads RPVDL.

This sequence belongs to the EPSP synthase family. MurA subfamily.

The protein resides in the cytoplasm. The enzyme catalyses phosphoenolpyruvate + UDP-N-acetyl-alpha-D-glucosamine = UDP-N-acetyl-3-O-(1-carboxyvinyl)-alpha-D-glucosamine + phosphate. The protein operates within cell wall biogenesis; peptidoglycan biosynthesis. Its function is as follows. Cell wall formation. Adds enolpyruvyl to UDP-N-acetylglucosamine. This Afipia carboxidovorans (strain ATCC 49405 / DSM 1227 / KCTC 32145 / OM5) (Oligotropha carboxidovorans) protein is UDP-N-acetylglucosamine 1-carboxyvinyltransferase.